A 503-amino-acid polypeptide reads, in one-letter code: Maturase K (503 aa).

The protein belongs to the intron maturase 2 family. MatK subfamily.

Its subcellular location is the plastid. The protein resides in the chloroplast. Its function is as follows. Usually encoded in the trnK tRNA gene intron. Probably assists in splicing its own and other chloroplast group II introns. This is Maturase K from Callistemon polandii (Gold-tipped bottlebrush).